Reading from the N-terminus, the 81-residue chain is Short neurotoxin 1 (81 aa).

An N-terminal signal peptide occupies residues 1-21 (MKTLLLSPVVVTIVCLDLGYT). Intrachain disulfides connect Cys-24-Cys-43, Cys-38-Cys-60, Cys-62-Cys-73, and Cys-74-Cys-79.

It belongs to the three-finger toxin family. Short-chain subfamily. Type I alpha-neurotoxin sub-subfamily. In terms of tissue distribution, expressed by the venom gland.

It is found in the secreted. Its function is as follows. Binds to muscle nicotinic acetylcholine receptor (nAChR) and inhibit acetylcholine from binding to the receptor, thereby impairing neuromuscular transmission. This Hydrophis peronii (Spiny-headed seasnake) protein is Short neurotoxin 1.